A 174-amino-acid polypeptide reads, in one-letter code: Methylated protein MJ0556 (174 aa).

CBS domains are found at residues 28–87 (MISG…YLNV) and 91–156 (MLKN…IIKE).

In terms of processing, methylated at an undetermined residue between Ser-2 and Asp-26.

This Methanocaldococcus jannaschii (strain ATCC 43067 / DSM 2661 / JAL-1 / JCM 10045 / NBRC 100440) (Methanococcus jannaschii) protein is Methylated protein MJ0556.